We begin with the raw amino-acid sequence, 397 residues long: Probable inactive purple acid phosphatase 28 (397 aa).

The signal sequence occupies residues 1–30; the sequence is MNCSIGNWKHTVLYLTLIVSLLYFIESLIS. N-linked (GlcNAc...) asparagine glycosylation is found at Asn-91 and Asn-209. Positions 266 and 314 each coordinate Zn(2+). 314–316 is a substrate binding site; sequence HDH. Residue His-316 participates in Fe cation binding.

It belongs to the metallophosphoesterase superfamily. Purple acid phosphatase family. As to quaternary structure, homodimer. It depends on Fe cation as a cofactor. The cofactor is Zn(2+). In terms of tissue distribution, expressed in roots, stems, leaves, flowers and siliques.

It localises to the secreted. The protein is Probable inactive purple acid phosphatase 28 (PAP28) of Arabidopsis thaliana (Mouse-ear cress).